The primary structure comprises 396 residues: NADH-ubiquinone oxidoreductase 49 kDa subunit (396 aa).

It belongs to the complex I 49 kDa subunit family.

The protein localises to the mitochondrion. It catalyses the reaction a ubiquinone + NADH + 5 H(+)(in) = a ubiquinol + NAD(+) + 4 H(+)(out). In terms of biological role, core subunit of the mitochondrial membrane respiratory chain NADH dehydrogenase (Complex I) that is believed to belong to the minimal assembly required for catalysis. Complex I functions in the transfer of electrons from NADH to the respiratory chain. The immediate electron acceptor for the enzyme is believed to be ubiquinone. Component of the iron-sulfur (IP) fragment of the enzyme. Component of the iron-sulfur (IP) fragment of the enzyme. The sequence is that of NADH-ubiquinone oxidoreductase 49 kDa subunit (NAD7) from Reclinomonas americana.